The chain runs to 306 residues: ORF-B protein (306 aa).

Transmembrane regions (helical) follow at residues 92–112, 120–140, and 161–181; these read MIQW…FPFI, LTHL…VFGW, and VIEW…IVVS.

In terms of assembly, interacts with host RACK1.

The protein localises to the host cytoplasm. It is found in the host cell membrane. The chain is ORF-B protein from Sander vitreus (Walleye).